The chain runs to 644 residues: Coiled-coil domain-containing protein 22 homolog (644 aa).

The tract at residues Asp-316–Gln-341 is disordered. Coiled-coil stretches lie at residues Lys-333–Val-383, Asp-409–Asp-486, and Gly-592–Ser-644.

It belongs to the CCDC22 family.

This chain is Coiled-coil domain-containing protein 22 homolog, found in Nematostella vectensis (Starlet sea anemone).